A 795-amino-acid chain; its full sequence is Protein translocase subunit SecA 2 (795 aa).

ATP-binding positions include Gln-84, Gly-102 to Thr-106, and Asp-496.

Belongs to the SecA family. In terms of assembly, monomer and homodimer. Part of the essential Sec protein translocation apparatus which comprises SecA, SecYEG and auxiliary proteins SecDF. Other proteins may also be involved.

It is found in the cell membrane. The protein resides in the cytoplasm. The enzyme catalyses ATP + H2O + cellular proteinSide 1 = ADP + phosphate + cellular proteinSide 2.. In terms of biological role, part of the Sec protein translocase complex. Interacts with the SecYEG preprotein conducting channel. Has a central role in coupling the hydrolysis of ATP to the transfer of proteins into and across the cell membrane, serving as an ATP-driven molecular motor driving the stepwise translocation of polypeptide chains across the membrane. The chain is Protein translocase subunit SecA 2 from Streptococcus agalactiae serotype V (strain ATCC BAA-611 / 2603 V/R).